The following is a 796-amino-acid chain: U-box domain-containing protein 51 (796 aa).

Disordered regions lie at residues 163-195 (DMDT…SSHQ), 218-240 (TNIG…SLDV), and 270-292 (RSSQ…SSSQ). Positions 171 to 181 (ADDRSESRFSS) are enriched in basic and acidic residues. The span at 182–195 (DSHSGTVSSTSSHQ) shows a compositional bias: low complexity. The segment covering 270–291 (RSSQMEEASSSSTYSDPTSSSS) has biased composition (low complexity). Residues 298–407 (ELEKLKIELR…QRLEDALEGG (110 aa)) adopt a coiled-coil conformation. In terms of domain architecture, Protein kinase spans 429–700 (FSDELKIGVG…DLGKEILPVL (272 aa)). ATP is bound by residues 435–443 (IGVGGYGSV) and Lys-456. Catalysis depends on Asp-557, which acts as the Proton acceptor. In terms of domain architecture, U-box spans 724–796 (NAPTHFYCPI…IKEWRSQLIK (73 aa)).

This sequence belongs to the protein kinase superfamily. Ser/Thr protein kinase family.

It carries out the reaction L-seryl-[protein] + ATP = O-phospho-L-seryl-[protein] + ADP + H(+). The catalysed reaction is L-threonyl-[protein] + ATP = O-phospho-L-threonyl-[protein] + ADP + H(+). The enzyme catalyses S-ubiquitinyl-[E2 ubiquitin-conjugating enzyme]-L-cysteine + [acceptor protein]-L-lysine = [E2 ubiquitin-conjugating enzyme]-L-cysteine + N(6)-ubiquitinyl-[acceptor protein]-L-lysine.. The protein operates within protein modification; protein ubiquitination. In terms of biological role, functions as an E3 ubiquitin ligase. The polypeptide is U-box domain-containing protein 51 (PUB51) (Arabidopsis thaliana (Mouse-ear cress)).